Here is a 421-residue protein sequence, read N- to C-terminus: Carboxypeptidase A4 (421 aa).

Residues 1 to 16 (MRWILFIGALIGSSIC) form the signal peptide. The propeptide at 17–113 (GQEKFFGDQV…EMQHNEGQER (97 aa)) is activation peptide. 8 residues coordinate a protein: Pro69, Val71, Asn119, Tyr123, His124, Ser125, Glu127, and Phe163. The region spanning 122 to 416 (AYHSLEAIYH…LGLKTIMEHV (295 aa)) is the Peptidase M14 domain. Residues His181 and Glu184 each contribute to the Zn(2+) site. The a protein site is built by Arg196, Lys197, and Ser248. Cys250 and Cys273 form a disulfide bridge. Asn260 is a glycosylation site (N-linked (GlcNAc...) asparagine). Asp270 contacts a protein. Residue His308 coordinates Zn(2+). The active-site Proton donor/acceptor is Glu382.

The protein belongs to the peptidase M14 family. As to quaternary structure, monomer. Interacts with LXN. Zn(2+) is required as a cofactor. In terms of tissue distribution, fetal expression in the adrenal gland, brain, heart, intestine, kidney, liver and lung. Except for fetal brain that shows no imprinting, expression was found preferentially from the maternal allele.

It localises to the secreted. With respect to regulation, inhibited by interaction with the metallocarboxypeptidase inhibitor (MCPI) from N.versicolor that binds to the catalytic zinc ion. Also inhibited by interaction with the S.magnifica carboxypeptidase inhibitor SmCI that penetrates the active site groove and inhibits activity by emulating a C-terminal substrate. Additionally inhibited by a carboxypeptidase inhibitor from H.medicinalis (leech) and R.bursa (tick). In terms of biological role, metalloprotease that cleaves hydrophobic C-terminal residues with a preference for -Phe, -Leu, -Ile, -Met, -Tyr and -Val. May function in peptide hormone and/or neuropeptide catabolism. The chain is Carboxypeptidase A4 (CPA4) from Homo sapiens (Human).